Reading from the N-terminus, the 202-residue chain is NADH-quinone oxidoreductase subunit C (202 aa).

The protein belongs to the complex I 30 kDa subunit family. In terms of assembly, NDH-1 is composed of 14 different subunits. Subunits NuoB, C, D, E, F, and G constitute the peripheral sector of the complex.

Its subcellular location is the cell inner membrane. The catalysed reaction is a quinone + NADH + 5 H(+)(in) = a quinol + NAD(+) + 4 H(+)(out). NDH-1 shuttles electrons from NADH, via FMN and iron-sulfur (Fe-S) centers, to quinones in the respiratory chain. The immediate electron acceptor for the enzyme in this species is believed to be ubiquinone. Couples the redox reaction to proton translocation (for every two electrons transferred, four hydrogen ions are translocated across the cytoplasmic membrane), and thus conserves the redox energy in a proton gradient. This is NADH-quinone oxidoreductase subunit C from Brucella abortus (strain 2308).